Consider the following 223-residue polypeptide: Putative HTLV-1-related endogenous sequence (223 aa).

Residues 1–19 (MRCAHAPAPRTRYPTRAPS) show a composition bias toward low complexity. Residues 1–184 (MRCAHAPAPR…ARAHGEAGAG (184 aa)) are disordered. Positions 115–126 (GDRRREGPDRSP) are enriched in basic and acidic residues. The segment covering 133 to 157 (PAAAAQPDSSSAQAPGPSTLRPAAT) has biased composition (low complexity).

The polypeptide is Putative HTLV-1-related endogenous sequence (HRES1) (Homo sapiens (Human)).